A 553-amino-acid polypeptide reads, in one-letter code: Hydroxylamine reductase (553 aa).

[2Fe-2S] cluster is bound by residues cysteine 3, cysteine 6, cysteine 18, and cysteine 25. Hybrid [4Fe-2O-2S] cluster is bound by residues histidine 252, glutamate 276, cysteine 320, cysteine 408, cysteine 436, cysteine 461, glutamate 495, and lysine 497. A Cysteine persulfide modification is found at cysteine 408.

The protein belongs to the HCP family. [2Fe-2S] cluster serves as cofactor. Requires hybrid [4Fe-2O-2S] cluster as cofactor.

The protein localises to the cytoplasm. It carries out the reaction A + NH4(+) + H2O = hydroxylamine + AH2 + H(+). In terms of biological role, catalyzes the reduction of hydroxylamine to form NH(3) and H(2)O. The chain is Hydroxylamine reductase from Photobacterium phosphoreum.